The chain runs to 348 residues: S-adenosylmethionine:tRNA ribosyltransferase-isomerase (348 aa).

Belongs to the QueA family. As to quaternary structure, monomer.

It localises to the cytoplasm. The enzyme catalyses 7-aminomethyl-7-carbaguanosine(34) in tRNA + S-adenosyl-L-methionine = epoxyqueuosine(34) in tRNA + adenine + L-methionine + 2 H(+). The protein operates within tRNA modification; tRNA-queuosine biosynthesis. Functionally, transfers and isomerizes the ribose moiety from AdoMet to the 7-aminomethyl group of 7-deazaguanine (preQ1-tRNA) to give epoxyqueuosine (oQ-tRNA). This is S-adenosylmethionine:tRNA ribosyltransferase-isomerase from Tolumonas auensis (strain DSM 9187 / NBRC 110442 / TA 4).